The chain runs to 63 residues: Large ribosomal subunit protein uL29 (63 aa).

Belongs to the universal ribosomal protein uL29 family.

The sequence is that of Large ribosomal subunit protein uL29 from Shewanella halifaxensis (strain HAW-EB4).